A 236-amino-acid polypeptide reads, in one-letter code: UPF0257 lipoprotein YnfC (236 aa).

Residues 1 to 16 (MKYKLLPCLLAIFLTG) form the signal peptide. The N-palmitoyl cysteine moiety is linked to residue Cys-17. Cys-17 carries S-diacylglycerol cysteine lipidation.

This sequence belongs to the UPF0257 family.

The protein resides in the cell membrane. The chain is UPF0257 lipoprotein YnfC from Escherichia coli O17:K52:H18 (strain UMN026 / ExPEC).